Consider the following 251-residue polypeptide: MAAHLLIVDALNLIRRIHAVQGSPCVETCQHALDQLIIHSQPTHAVAVFDDDARSSGWRHQRLPDYKAGRPPMPDDLHNEMPALRAAFEQRGVRCWASDGNEADDLAATLALKVTEAGHQATIVSTDKGYCQLLSPGLRIRDYFQKRWLDAPFIEKEFGVLPRQLPDYWGLAGISSSKVPGVAGIGPKSATQLLIQFQNLEGIYAHLDEVPEKWRKKLETHKEMAFLCRDIARLQTDLHIDGNLQQLRLAR.

Mg(2+) is bound at residue D104. One can recognise a 5'-3' exonuclease domain in the interval 160–249 (VLPRQLPDYW…IDGNLQQLRL (90 aa)). K(+) is bound by residues L171, A172, P180, V182, and I185. The interval 184–189 (GIGPKS) is interaction with DNA.

This sequence belongs to the Xni family. Mg(2+) serves as cofactor. K(+) is required as a cofactor.

Its function is as follows. Has flap endonuclease activity. During DNA replication, flap endonucleases cleave the 5'-overhanging flap structure that is generated by displacement synthesis when DNA polymerase encounters the 5'-end of a downstream Okazaki fragment. The polypeptide is Flap endonuclease Xni (Salmonella typhimurium (strain LT2 / SGSC1412 / ATCC 700720)).